Here is a 431-residue protein sequence, read N- to C-terminus: Adenylosuccinate lyase (431 aa).

N(6)-(1,2-dicarboxyethyl)-AMP-binding positions include 4–5 (RY), 67–69 (RHD), and 93–94 (TS). The active-site Proton donor/acceptor is histidine 141. Glutamine 212 contacts N(6)-(1,2-dicarboxyethyl)-AMP. Serine 262 serves as the catalytic Proton donor/acceptor. Residues serine 263, 268–270 (KRN), asparagine 276, and 307–311 (SAERI) each bind N(6)-(1,2-dicarboxyethyl)-AMP.

It belongs to the lyase 1 family. Adenylosuccinate lyase subfamily. In terms of assembly, homodimer and homotetramer. Residues from neighboring subunits contribute catalytic and substrate-binding residues to each active site.

It catalyses the reaction N(6)-(1,2-dicarboxyethyl)-AMP = fumarate + AMP. The catalysed reaction is (2S)-2-[5-amino-1-(5-phospho-beta-D-ribosyl)imidazole-4-carboxamido]succinate = 5-amino-1-(5-phospho-beta-D-ribosyl)imidazole-4-carboxamide + fumarate. Its pathway is purine metabolism; AMP biosynthesis via de novo pathway; AMP from IMP: step 2/2. It participates in purine metabolism; IMP biosynthesis via de novo pathway; 5-amino-1-(5-phospho-D-ribosyl)imidazole-4-carboxamide from 5-amino-1-(5-phospho-D-ribosyl)imidazole-4-carboxylate: step 2/2. In terms of biological role, catalyzes two reactions in de novo purine nucleotide biosynthesis. Catalyzes the breakdown of 5-aminoimidazole- (N-succinylocarboxamide) ribotide (SAICAR or 2-[5-amino-1-(5-phospho-beta-D-ribosyl)imidazole-4-carboxamido]succinate) to 5-aminoimidazole-4-carboxamide ribotide (AICAR or 5-amino-1-(5-phospho-beta-D-ribosyl)imidazole-4-carboxamide) and fumarate, and of adenylosuccinate (ADS or N(6)-(1,2-dicarboxyethyl)-AMP) to adenosine monophosphate (AMP) and fumarate. In Staphylococcus haemolyticus (strain JCSC1435), this protein is Adenylosuccinate lyase (purB).